The primary structure comprises 258 residues: Isoprenyl transferase (258 aa).

The active site involves Asp-38. Asp-38 is a Mg(2+) binding site. Residues 39–42 (GNGR), Trp-43, Arg-51, His-55, and 83–85 (STE) each bind substrate. Residue Asn-86 is the Proton acceptor of the active site. Residues Trp-87, Arg-89, Arg-206, and 212 to 214 (RIS) contribute to the substrate site. Glu-225 lines the Mg(2+) pocket.

Belongs to the UPP synthase family. In terms of assembly, homodimer. Requires Mg(2+) as cofactor.

Functionally, catalyzes the condensation of isopentenyl diphosphate (IPP) with allylic pyrophosphates generating different type of terpenoids. This is Isoprenyl transferase from Bacillus cereus (strain ATCC 10987 / NRS 248).